The following is a 455-amino-acid chain: O-acyltransferase pigD (455 aa).

The protein belongs to the trichothecene 3-O-acetyltransferase family.

Its pathway is secondary metabolite biosynthesis. Functionally, O-acetyltransferase; part of the gene cluster that mediates the biosynthesis of azaphilone pigments (MonAzPs), a complex mixture of compounds with a common azaphilone skeleton very widely used as food colorants. Within the pathway, pigD directly transfers the fatty acyl chain from the beta-ketoacyl-ACP produced by the pigJ-pigK fatty acid synthase (FAS) to the C-4 alcohol. The first step of the pathway is performed by the nrPKS pigA that forms the hexaketide precursor from successive condensations of five malonyl-CoA units, with a simple acetyl-CoA starter unit. The role of esterase pigG is not clear, but it may play at most a supplementary role in the formation of the benzaldehyde produced by the pigA nrPKS. This very reactive benzaldehyde is intercepted by the pigC ketoreductase that to provide the first stable enzyme-free MonAzPs intermediate, 6-(4-hydroxy-2-oxopentyl)-3-methyl-2,4-dioxocyclohexane carbaldehyde, also known as M7PKS-1. The FAD-dependent monooxygenase pigN hydroxylates M7PKS-1 at C-4, which triggers the formation of the pyran ring. PigJ, pigK and pigD are involved in the acetylation of the pyran ring. PigJ and pigK form the two subunits of a dedicated fungal FAS that produces the side chain fatty acyl moiety of MonAzPs and pigD transfers the fatty acyl chain to the C-4 alcohol. PigM and pigO are involved in the elimination of the omega-1 alcohol. PigM acts as an O-acetyltransferase that synthesizes the putative O-11 acetyl intermediate whereas pigO eliminates acetic acid to yield an intermediate with a C10(11) double bond. The dehydration of the C-11 alcohol followed by the reduction of the C6(7) double bond by the NAD(P)H-dependent oxidoreductase pigE increases the electrophilicity of the C-5 ketone of the resulting acyl benzopyran. This in turn sets up the C-5 ketone for an intramolecular Knoevenagel aldol condensation with the C-20 enol of the side chain. This condensation affords the characteristic linear tricyclic carbon skeletons of the yellow pigments that serve as the common precursors for the classical yellow pigments monascin and ankaflavin, orange pigments rubopunctatin and monascorubrin, and red pigments ribropunctamine and monascorubramine. The FAD-dependent oxidoreductase pigF is especially invoved in the biosynthesis of orange and red pigments via desaturation of C6(7). In Monascus ruber (Mold), this protein is O-acyltransferase pigD.